We begin with the raw amino-acid sequence, 97 residues long: UPF0223 protein lp_2149 (97 aa).

Belongs to the UPF0223 family.

The protein is UPF0223 protein lp_2149 of Lactiplantibacillus plantarum (strain ATCC BAA-793 / NCIMB 8826 / WCFS1) (Lactobacillus plantarum).